The primary structure comprises 215 residues: Tricarboxylate transporter ALT9 (215 aa).

Solcar repeat units lie at residues 18–106 (TTVV…LAPM) and 111–197 (CGVS…VVRL). 3 consecutive transmembrane segments (helical) span residues 19–39 (TVVG…VLVL), 112–132 (GVST…YCTM), and 182–202 (VAGA…GFLV).

Belongs to the mitochondrial carrier (TC 2.A.29) family.

It is found in the mitochondrion inner membrane. The protein operates within mycotoxin biosynthesis. In terms of biological role, tricarboxylate transporter; part of the gene cluster that mediates the biosynthesis of the host-selective toxins (HSTs) AAL-toxins, sphinganine-analog mycotoxins responsible for Alternaria stem canker on tomato by the tomato pathotype. The biosynthesis starts with the polyketide synthase ALT1-catalyzed C-16 carbon chain assembly from one starter acetyl-CoA unit with malonyl-CoA extender units. ALT1 also selectively transfers methyl groups at the first and the third cycle of chain elongation for AAL toxin. The C-16 polyketide chain is released from the enzyme by a nucleophilic attack of a carbanion, which is derived from R-carbon of glycin by decarboxylation, on the carbonyl carbon of polyketide acyl chain. This step is probably catalyzed by a pyridoxal 5'-phosphate-dependent aminoacyl transferase ALT4. The respective functions of the other enzymes encoded by the cluster have still to be elucidated. The sphingosine N-acyltransferase-like protein ALT7 seems not to act as a resistance/self-tolerance factor against the toxin in the toxin biosynthetic gene cluster, contrary to what is expected. In Alternaria alternata (Alternaria rot fungus), this protein is Tricarboxylate transporter ALT9.